We begin with the raw amino-acid sequence, 308 residues long: Eukaryotic translation initiation factor 3 subunit G-A (308 aa).

Disordered stretches follow at residues 1-35 (MPTGDYDSKPSWADQVEEEGIDAEPLSPQIRKPDP) and 177-226 (TGDK…ADDN). Residues 185-194 (GAEPEPAQAP) are compositionally biased toward low complexity. Residues 209–226 (GGSRRGESMQPNRRADDN) show a composition bias toward basic and acidic residues. Residues 227–305 (ATIRVTNLSE…LILNVEWAKP (79 aa)) enclose the RRM domain.

This sequence belongs to the eIF-3 subunit G family. Component of the eukaryotic translation initiation factor 3 (eIF-3) complex, which is composed of 13 subunits: eif3a, eif3b, eif3c, eif3d, eif3e, eif3f, eif3g, eif3h, eif3i, eif3j, eif3k, eif3l and eif3m.

Its subcellular location is the cytoplasm. Its function is as follows. RNA-binding component of the eukaryotic translation initiation factor 3 (eIF-3) complex, which is involved in protein synthesis of a specialized repertoire of mRNAs and, together with other initiation factors, stimulates binding of mRNA and methionyl-tRNAi to the 40S ribosome. The eIF-3 complex specifically targets and initiates translation of a subset of mRNAs involved in cell proliferation. This subunit can bind 18S rRNA. The sequence is that of Eukaryotic translation initiation factor 3 subunit G-A (eif3g-a) from Xenopus laevis (African clawed frog).